A 351-amino-acid polypeptide reads, in one-letter code: MAATTYMPAEMELGNIGGYHAASPRSAEPADMKYQHPLHSGGSPSPGAPVIGNPWTSLPPADPWAMHQHHAHAHQPDVKPPPAPHDHRHLQHAAHGWHAPVVSPHYGAARPSHCMEDTQCPCTNTICSETSSPRDPLHHHAMERDQPEEDTPTSDDLEAFAKQFKQRRIKLGFTQADVGLALGTLYGNVFSQTTICRFEALQLSFKNMCKLKPLLQKWLEEADSTTGSPTSIDKIAAQGRKRKKRTSIEVSVKGALEQHFHKQPKPSAQEITSLADSLQLEKEVVRVWFCNRRQKEKRMTPPNTLGGEMMEGMGHAHYGHGDVHGSPLQHSPPGLSPQHGLPQGAHTLAAH.

Disordered regions lie at residues 61–88 (ADPW…HDHR) and 131–154 (SSPR…TPTS). Over residues 135 to 145 (DPLHHHAMERD) the composition is skewed to basic and acidic residues. The POU-specific domain occupies 149 to 223 (EDTPTSDDLE…LLQKWLEEAD (75 aa)). The homeobox DNA-binding region spans 241-300 (KRKKRTSIEVSVKGALEQHFHKQPKPSAQEITSLADSLQLEKEVVRVWFCNRRQKEKRMT). The disordered stretch occupies residues 314–351 (GHAHYGHGDVHGSPLQHSPPGLSPQHGLPQGAHTLAAH).

It belongs to the POU transcription factor family. Class-3 subfamily. In terms of tissue distribution, restricted to the middle silk gland.

It is found in the nucleus. In terms of biological role, involved in the transcriptional regulation of sericin-1 gene. The sequence is that of Silk gland factor 3 (SGF3) from Bombyx mori (Silk moth).